The primary structure comprises 1405 residues: DNA-directed RNA polymerase subunit beta' (1405 aa).

Positions 70, 72, 85, and 88 each coordinate Zn(2+). Mg(2+)-binding residues include aspartate 460, aspartate 462, and aspartate 464. Cysteine 814, cysteine 888, cysteine 895, and cysteine 898 together coordinate Zn(2+).

Belongs to the RNA polymerase beta' chain family. As to quaternary structure, the RNAP catalytic core consists of 2 alpha, 1 beta, 1 beta' and 1 omega subunit. When a sigma factor is associated with the core the holoenzyme is formed, which can initiate transcription. Mg(2+) serves as cofactor. Requires Zn(2+) as cofactor.

It carries out the reaction RNA(n) + a ribonucleoside 5'-triphosphate = RNA(n+1) + diphosphate. In terms of biological role, DNA-dependent RNA polymerase catalyzes the transcription of DNA into RNA using the four ribonucleoside triphosphates as substrates. The protein is DNA-directed RNA polymerase subunit beta' of Shewanella putrefaciens (strain CN-32 / ATCC BAA-453).